The following is a 505-amino-acid chain: MRTLLALAALAGFAAARVPAYAITRPVMRSDSRADAVKEAFSHAWDGYYNYAFPHDELHPISNGYGDSRNHWGASAVDALSTAIMMRNATIVNQILDHIAAVDYSKTNAMVSLFETTIRYLAGMISGYDLLKGPAAGLVDDSRVDVLLEQSQNLAEVLKFAFDTPSGVPYNMINITSGGNDGATTNGLAVTGTLVLEWTRLSDLTGNDEYARLSQRAEDYLLHPEPAQYEPFPGLIGSAVNIADGKLANGHISWNGGADSYYEYLIKMYVYDPERFGLYRDRWVAAAESSINHLASHPSTRPDVTFLATYNEEHQLGLTSQHLTCFDGGSFLLGGTLLDRQDFVDFGLDLVAGCHETYNSTLTGIGPEQFSWDPNGVPDSQKELFERAGFYINSGQYILRPEVIESFYYAWRVTGDGTYREWVWNAFTNINKYCRTATGFAGLENVNAANGGGRIDNQESFMFAEVLKYSFLTFAPEDDWQVQKGSGNTFVYNTEAHPFKVYTPQ.

The signal sequence occupies residues 1–16; that stretch reads MRTLLALAALAGFAAA. N-linked (GlcNAc...) asparagine glycans are attached at residues Asn-88 and Asn-174. Cys-325 and Cys-354 are oxidised to a cystine. N-linked (GlcNAc...) asparagine glycosylation occurs at Asn-359. Glu-368 functions as the Proton donor in the catalytic mechanism. Ca(2+) is bound at residue Thr-494.

This sequence belongs to the glycosyl hydrolase 47 family. As to quaternary structure, monomer. It depends on Ca(2+) as a cofactor. Mg(2+) serves as cofactor.

It is found in the cytoplasmic vesicle lumen. It catalyses the reaction N(4)-(alpha-D-Man-(1-&gt;2)-alpha-D-Man-(1-&gt;2)-alpha-D-Man-(1-&gt;3)-[alpha-D-Man-(1-&gt;2)-alpha-D-Man-(1-&gt;3)-[alpha-D-Man-(1-&gt;2)-alpha-D-Man-(1-&gt;6)]-alpha-D-Man-(1-&gt;6)]-beta-D-Man-(1-&gt;4)-beta-D-GlcNAc-(1-&gt;4)-beta-D-GlcNAc)-L-asparaginyl-[protein] (N-glucan mannose isomer 9A1,2,3B1,2,3) + 4 H2O = N(4)-(alpha-D-Man-(1-&gt;3)-[alpha-D-Man-(1-&gt;3)-[alpha-D-Man-(1-&gt;6)]-alpha-D-Man-(1-&gt;6)]-beta-D-Man-(1-&gt;4)-beta-D-GlcNAc-(1-&gt;4)-beta-D-GlcNAc)-L-asparaginyl-[protein] (N-glucan mannose isomer 5A1,2) + 4 beta-D-mannose. It carries out the reaction N(4)-(alpha-D-Man-(1-&gt;2)-alpha-D-Man-(1-&gt;2)-alpha-D-Man-(1-&gt;3)-[alpha-D-Man-(1-&gt;3)-[alpha-D-Man-(1-&gt;2)-alpha-D-Man-(1-&gt;6)]-alpha-D-Man-(1-&gt;6)]-beta-D-Man-(1-&gt;4)-beta-D-GlcNAc-(1-&gt;4)-beta-D-GlcNAc)-L-asparaginyl-[protein] (N-glucan mannose isomer 8A1,2,3B1,3) + 3 H2O = N(4)-(alpha-D-Man-(1-&gt;3)-[alpha-D-Man-(1-&gt;3)-[alpha-D-Man-(1-&gt;6)]-alpha-D-Man-(1-&gt;6)]-beta-D-Man-(1-&gt;4)-beta-D-GlcNAc-(1-&gt;4)-beta-D-GlcNAc)-L-asparaginyl-[protein] (N-glucan mannose isomer 5A1,2) + 3 beta-D-mannose. The protein operates within protein modification; protein glycosylation. Functionally, involved in the maturation of Asn-linked oligosaccharides. Progressively trims alpha-1,2-linked mannose residues from Man(9)GlcNAc(2) to produce Man(5)GlcNAc(2). The polypeptide is Mannosyl-oligosaccharide alpha-1,2-mannosidase 1B (mns1B) (Emericella nidulans (strain FGSC A4 / ATCC 38163 / CBS 112.46 / NRRL 194 / M139) (Aspergillus nidulans)).